The sequence spans 879 residues: DNA mismatch repair protein MutS (879 aa).

629–636 (GPNMAGKS) is a binding site for ATP. Residues 824-845 (VGGQPQKELSEHKPHQPSLFAP) form a disordered region.

Belongs to the DNA mismatch repair MutS family.

Functionally, this protein is involved in the repair of mismatches in DNA. It is possible that it carries out the mismatch recognition step. This protein has a weak ATPase activity. This is DNA mismatch repair protein MutS from Desulfotalea psychrophila (strain LSv54 / DSM 12343).